The primary structure comprises 81 residues: Translational regulator CsrA (81 aa).

The segment covering 59–71 has biased composition (polar residues); the sequence is SQMQHLEQGNFPT. The disordered stretch occupies residues 59–81; sequence SQMQHLEQGNFPTSFDDDDFFNR.

The protein belongs to the CsrA/RsmA family. In terms of assembly, homodimer; the beta-strands of each monomer intercalate to form a hydrophobic core, while the alpha-helices form wings that extend away from the core.

The protein localises to the cytoplasm. A key translational regulator that binds mRNA to regulate translation initiation and/or mRNA stability. Mediates global changes in gene expression, shifting from rapid growth to stress survival by linking envelope stress, the stringent response and the catabolite repression systems. Usually binds in the 5'-UTR; binding at or near the Shine-Dalgarno sequence prevents ribosome-binding, repressing translation, binding elsewhere in the 5'-UTR can activate translation and/or stabilize the mRNA. Its function is antagonized by small RNA(s). This Psychrobacter sp. (strain PRwf-1) protein is Translational regulator CsrA.